A 291-amino-acid chain; its full sequence is tRNA dimethylallyltransferase (291 aa).

G5–S12 lines the ATP pocket. A substrate-binding site is contributed by T7–S12. The tract at residues D30–Q33 is interaction with substrate tRNA.

It belongs to the IPP transferase family. As to quaternary structure, monomer. Requires Mg(2+) as cofactor.

The enzyme catalyses adenosine(37) in tRNA + dimethylallyl diphosphate = N(6)-dimethylallyladenosine(37) in tRNA + diphosphate. Functionally, catalyzes the transfer of a dimethylallyl group onto the adenine at position 37 in tRNAs that read codons beginning with uridine, leading to the formation of N6-(dimethylallyl)adenosine (i(6)A). The sequence is that of tRNA dimethylallyltransferase from Frankia casuarinae (strain DSM 45818 / CECT 9043 / HFP020203 / CcI3).